The following is a 94-amino-acid chain: Lipoate-protein ligase A subunit 2 (94 aa).

Heterodimer composed of LplA and LplB.

It carries out the reaction L-lysyl-[lipoyl-carrier protein] + (R)-lipoate + ATP = N(6)-[(R)-lipoyl]-L-lysyl-[lipoyl-carrier protein] + AMP + diphosphate + H(+). Its pathway is protein modification; protein lipoylation via exogenous pathway; protein N(6)-(lipoyl)lysine from lipoate: step 1/2. The protein operates within protein modification; protein lipoylation via exogenous pathway; protein N(6)-(lipoyl)lysine from lipoate: step 2/2. Functionally, part of a lipoate-protein ligase complex that catalyzes both the ATP-dependent activation of exogenously supplied lipoate to lipoyl-AMP and the transfer of the activated lipoyl onto the lipoyl domains of lipoate-dependent enzymes. Can also use octanoate as substrate. This is Lipoate-protein ligase A subunit 2 (lplB) from Thermoplasma acidophilum (strain ATCC 25905 / DSM 1728 / JCM 9062 / NBRC 15155 / AMRC-C165).